Here is a 472-residue protein sequence, read N- to C-terminus: Eukaryotic translation initiation factor 2 subunit 3, X-linked (472 aa).

A2 carries the post-translational modification N-acetylalanine. Position 16 is a phosphoserine (S16). Residues 39–248 form the tr-type G domain; sequence QATINIGTIG…IVKKIPVPPR (210 aa). The tract at residues 48-55 is G1; that stretch reads GHVAHGKS. Position 51–56 (51–56) interacts with GTP; the sequence is AHGKST. The segment at 76-80 is G2; the sequence is NITIK. The segment at 134–137 is G3; it reads DCPG. Residues 190–193 and 225–227 contribute to the GTP site; these read NKID and SAQ. Residues 190-193 form a G4 region; that stretch reads NKID. Residues 225-227 form a G5 region; that stretch reads SAQ. The tract at residues 457–469 is interacts with Cdc123; that stretch reads GQIRRGVTIKPTV.

The protein belongs to the TRAFAC class translation factor GTPase superfamily. Classic translation factor GTPase family. EIF2G subfamily. As to quaternary structure, eukaryotic translation initiation factor 2 eIF2 is a heterotrimeric complex composed of an alpha (EIF2S1), a beta (EIF2S2) and a gamma (EIF2S3) chain. eIF2 is member of the 43S pre-initiation complex (43S PIC). Interacts (via C-terminus) with CDC123; the interaction is direct. In terms of tissue distribution, widely expressed.

Its subcellular location is the cytoplasm. It localises to the cytosol. The enzyme catalyses GTP + H2O = GDP + phosphate + H(+). Functionally, member of the eIF2 complex that functions in the early steps of protein synthesis by forming a ternary complex with GTP and initiator tRNA. This complex binds to a 40S ribosomal subunit, followed by mRNA binding to form the 43S pre-initiation complex (43S PIC). Junction of the 60S ribosomal subunit to form the 80S initiation complex is preceded by hydrolysis of the GTP bound to eIF2 and release of an eIF2-GDP binary complex. In order for eIF2 to recycle and catalyze another round of initiation, the GDP bound to eIF2 must exchange with GTP by way of a reaction catalyzed by eIF-2B. Along with its paralog on chromosome Y, may contribute to spermatogenesis up to the round spermatid stage. This Rattus norvegicus (Rat) protein is Eukaryotic translation initiation factor 2 subunit 3, X-linked (Eif2s3).